Reading from the N-terminus, the 441-residue chain is Ankyrin repeat and MYND domain-containing protein 2 (441 aa).

ANK repeat units follow at residues 45-74 (NGMT…DVNC), 79-108 (HGYT…ETDV), and 159-188 (KLAG…NPLL). Zn(2+) is bound by residues cysteine 320, cysteine 323, cysteine 332, cysteine 335, cysteine 341, cysteine 345, histidine 353, and cysteine 357. Residues 320–357 (CTTCGEKGASKRCSVCKMVIYCDQTCQKTHWFTHKKIC) form an MYND-type zinc finger. Residues 374–384 (EKRQEENHGKL) show a composition bias toward basic and acidic residues. Positions 374-441 (EKRQEENHGK…APAGPQVSEE (68 aa)) are disordered.

As to quaternary structure, interacts with the retinal-specific guanylyl cyclase GC1.

The protein resides in the cell projection. Its subcellular location is the cilium. Its function is as follows. May be involved in the trafficking of signaling proteins to the cilia. This Homo sapiens (Human) protein is Ankyrin repeat and MYND domain-containing protein 2 (ANKMY2).